A 122-amino-acid chain; its full sequence is Biogenesis of lysosome-related organelles complex 1 subunit CNL1 (122 aa).

Residues 1 to 10 show a composition bias toward basic and acidic residues; the sequence is MQDNSSHSRE. Positions 1-21 are disordered; sequence MQDNSSHSRESASAGDDPLGI. The stretch at 63 to 95 forms a coiled coil; sequence ENTIDKNIAKFKELLEKCDTLENHYEMLNQLAI.

The protein belongs to the BLOC1S4 family. In terms of assembly, component of the biogenesis of lysosome-related organelles complex-1 (BLOC-1) composed of at least BLI1, BLS1, CNL1, KXD1, SNN1 and VAB2.

It is found in the cytoplasm. In terms of biological role, component of the biogenesis of lysosome-related organelles complex-1 (BLOC-1), a complex that is involved in endosomal cargo sorting. The protein is Biogenesis of lysosome-related organelles complex 1 subunit CNL1 (CLN1) of Saccharomyces cerevisiae (strain RM11-1a) (Baker's yeast).